The following is a 438-amino-acid chain: 23S rRNA (uracil(1939)-C(5))-methyltransferase RlmD (438 aa).

Positions 8–68 constitute a TRAM domain; sequence KQKTNNVQTI…RQYGHATAKK (61 aa). [4Fe-4S] cluster contacts are provided by C81, C87, C90, and C168. S-adenosyl-L-methionine contacts are provided by Q271, F300, N305, E321, D348, and D369. Residue C395 is the Nucleophile of the active site.

The protein belongs to the class I-like SAM-binding methyltransferase superfamily. RNA M5U methyltransferase family. RlmD subfamily.

It catalyses the reaction uridine(1939) in 23S rRNA + S-adenosyl-L-methionine = 5-methyluridine(1939) in 23S rRNA + S-adenosyl-L-homocysteine + H(+). Catalyzes the formation of 5-methyl-uridine at position 1939 (m5U1939) in 23S rRNA. In Haemophilus influenzae (strain 86-028NP), this protein is 23S rRNA (uracil(1939)-C(5))-methyltransferase RlmD.